The following is a 350-amino-acid chain: 2,5-dihydroxypyridine 5,6-dioxygenase (350 aa).

3 residues coordinate Fe cation: His-265, His-318, and Asp-320.

Fe(2+) serves as cofactor.

It carries out the reaction 2,5-dihydroxypyridine + O2 = N-formylmaleamate + H(+). It functions in the pathway cofactor degradation; nicotinate degradation. Catalyzes the dioxygenolytic ring cleavage of 2,5-dihydroxypyridine between carbons 5 and 6 generating N-formylmaleamate in the aerobic nicotinate degradation pathway. This chain is 2,5-dihydroxypyridine 5,6-dioxygenase (nicX), found in Pseudomonas putida (strain ATCC 47054 / DSM 6125 / CFBP 8728 / NCIMB 11950 / KT2440).